The primary structure comprises 458 residues: Argininosuccinate lyase (458 aa).

This sequence belongs to the lyase 1 family. Argininosuccinate lyase subfamily.

It localises to the cytoplasm. It carries out the reaction 2-(N(omega)-L-arginino)succinate = fumarate + L-arginine. It participates in amino-acid biosynthesis; L-arginine biosynthesis; L-arginine from L-ornithine and carbamoyl phosphate: step 3/3. This Hydrogenobaculum sp. (strain Y04AAS1) protein is Argininosuccinate lyase.